The chain runs to 653 residues: Large subunit GTPase 1 homolog (653 aa).

Residues M1–D31 form a disordered region. Residues L16–R28 are compositionally biased toward basic residues. Residues S93 and S97 each carry the phosphoserine modification. The CP-type G domain maps to W164–P445. N212 to D215 contributes to the GTP binding site. The interval D251–H358 is disordered. A Phosphoserine modification is found at S252. Residues K258–A288 are compositionally biased toward basic and acidic residues. Positions T299–G333 are enriched in acidic residues. GTP is bound by residues G394–S401 and D438–G441. The disordered stretch occupies residues S630–L653. A compositionally biased stretch (basic residues) spans P637–K647.

The protein belongs to the TRAFAC class YlqF/YawG GTPase family. LSG1 subfamily.

Its subcellular location is the cytoplasm. It localises to the endoplasmic reticulum. The protein resides in the nucleus. The protein localises to the cajal body. It catalyses the reaction GTP + H2O = GDP + phosphate + H(+). Functions as a GTPase. May act by mediating the release of NMD3 from the 60S ribosomal subunit after export into the cytoplasm during the 60S ribosomal subunit maturation. The sequence is that of Large subunit GTPase 1 homolog from Macaca fascicularis (Crab-eating macaque).